The following is a 61-amino-acid chain: uncharacterized protein (61 aa).

The next 2 helical transmembrane spans lie at 4 to 24 and 34 to 54; these read IIAF…VASM and SSVI…IMPM.

It is found in the cell membrane. This is an uncharacterized protein from Bacillus subtilis (strain 168).